Consider the following 349-residue polypeptide: MDIPSMHDHDRYELVKDIGSGNFGVARLMRDKKTRELVAVKYIERGEKIDENVQREIINHRSLRHPNIVRFKEVMLTPTHLAIVMEYAAGGELFERICNAGRFSEDEARFFFQQLISGVSYCHSMQICHRDLKLENTLLDGSPAPRLKICDFGYSKSSLLHSQPKSTVGTPAYIAPEVLSKKEYDGKIADVWSCGVTLYVMLVGAYPFEDPEDPRNFRKTIGRILSVQYSIPDYVHISVECRHLLSRIFVANPAKRINIQEIKNHEWFLKNLPADLVDLADRSYDFEDPNHPPQSIEEIMRIISEARVLGTGATGDYFGDSVDDMDLENDVDPDADPDVGSSGEFVCAM.

The Protein kinase domain maps to 12 to 268 (YELVKDIGSG…IQEIKNHEWF (257 aa)). Residues 18 to 26 (IGSGNFGVA) and K41 each bind ATP. D131 serves as the catalytic Proton acceptor. The activation loop stretch occupies residues 151–177 (DFGYSKSSLLHSQPKSTVGTPAYIAPE).

The protein belongs to the protein kinase superfamily. Ser/Thr protein kinase family.

The enzyme catalyses L-seryl-[protein] + ATP = O-phospho-L-seryl-[protein] + ADP + H(+). It carries out the reaction L-threonyl-[protein] + ATP = O-phospho-L-threonyl-[protein] + ADP + H(+). With respect to regulation, activated by osmotic stress and by abscisic acid (ABA). Activation by NaCl is dependent on ABA. Functionally, involved in early responses to osmotic stress. The polypeptide is Serine/threonine-protein kinase SRK2A (Physcomitrium patens (Spreading-leaved earth moss)).